The following is a 297-amino-acid chain: tRNA pseudouridine synthase B (297 aa).

Catalysis depends on aspartate 39, which acts as the Nucleophile.

This sequence belongs to the pseudouridine synthase TruB family. Type 1 subfamily.

The catalysed reaction is uridine(55) in tRNA = pseudouridine(55) in tRNA. Responsible for synthesis of pseudouridine from uracil-55 in the psi GC loop of transfer RNAs. The chain is tRNA pseudouridine synthase B from Lactobacillus johnsonii (strain CNCM I-12250 / La1 / NCC 533).